Consider the following 243-residue polypeptide: Small ribosomal subunit protein uS3 (243 aa).

In terms of domain architecture, KH type-2 spans 38-106 (IRKYLNARLA…DIQINIFEVK (69 aa)). The disordered stretch occupies residues 214-243 (PNFTQSKESGRGNNGGNNGGKNFKRKKNNR).

The protein belongs to the universal ribosomal protein uS3 family. As to quaternary structure, part of the 30S ribosomal subunit. Forms a tight complex with proteins S10 and S14.

Binds the lower part of the 30S subunit head. Binds mRNA in the 70S ribosome, positioning it for translation. In Bacteroides thetaiotaomicron (strain ATCC 29148 / DSM 2079 / JCM 5827 / CCUG 10774 / NCTC 10582 / VPI-5482 / E50), this protein is Small ribosomal subunit protein uS3.